A 545-amino-acid polypeptide reads, in one-letter code: ATP synthase subunit alpha (545 aa).

An ATP-binding site is contributed by 173–180 (GDRQTGKS).

It belongs to the ATPase alpha/beta chains family. In terms of assembly, F-type ATPases have 2 components, CF(1) - the catalytic core - and CF(0) - the membrane proton channel. CF(1) has five subunits: alpha(3), beta(3), gamma(1), delta(1), epsilon(1). CF(0) has three main subunits: a(1), b(2) and c(9-12). The alpha and beta chains form an alternating ring which encloses part of the gamma chain. CF(1) is attached to CF(0) by a central stalk formed by the gamma and epsilon chains, while a peripheral stalk is formed by the delta and b chains.

The protein localises to the cell membrane. The catalysed reaction is ATP + H2O + 4 H(+)(in) = ADP + phosphate + 5 H(+)(out). Functionally, produces ATP from ADP in the presence of a proton gradient across the membrane. The alpha chain is a regulatory subunit. The protein is ATP synthase subunit alpha of Pseudarthrobacter chlorophenolicus (strain ATCC 700700 / DSM 12829 / CIP 107037 / JCM 12360 / KCTC 9906 / NCIMB 13794 / A6) (Arthrobacter chlorophenolicus).